The primary structure comprises 347 residues: MSNLTVGCLANATVCEGASCVAPESNFNAILSVVLSTVLTILLALVMFSMGCNVEIKKFLGHIRRPWGIFIGFLCQFGIMPLTGFVLAVAFGIMPIQAVVVLIMGCCPGGTASNILAYWVDGDMDLSVSMTTCSTLLALGMMPLCLYVYTKMWVDSGTIVIPYDNIGTSLVALVVPVSIGMFVNHKWPQKAKIILKVGSIAGAVLIVLIAVVGGILYQSAWIIEPKLWIIGTIFPMAGYSLGFFLARIAGQPWYRCRTVALETGMQNTQLCSTIVQLSFSPEDLTYVFTFPLIYSIFQIAFAAIFLGIYVAYRKCHGKNDAEFPDIKDTKTEPESSFHQMNGGFQPE.

The Extracellular portion of the chain corresponds to 1–29; it reads MSNLTVGCLANATVCEGASCVAPESNFNA. N-linked (GlcNAc...) asparagine glycans are attached at residues asparagine 3 and asparagine 11. A helical transmembrane segment spans residues 30-50; that stretch reads ILSVVLSTVLTILLALVMFSM. Over 51–83 the chain is Cytoplasmic; that stretch reads GCNVEIKKFLGHIRRPWGIFIGFLCQFGIMPLT. Residues 84–104 form a helical membrane-spanning segment; the sequence is GFVLAVAFGIMPIQAVVVLIM. The Extracellular portion of the chain corresponds to 105–127; that stretch reads GCCPGGTASNILAYWVDGDMDLS. Residues 128–148 traverse the membrane as a helical segment; it reads VSMTTCSTLLALGMMPLCLYV. Over 149-158 the chain is Cytoplasmic; sequence YTKMWVDSGT. The helical transmembrane segment at 159 to 179 threads the bilayer; the sequence is IVIPYDNIGTSLVALVVPVSI. Topologically, residues 180–196 are extracellular; the sequence is GMFVNHKWPQKAKIILK. A helical membrane pass occupies residues 197–217; that stretch reads VGSIAGAVLIVLIAVVGGILY. Residues 218–225 lie on the Cytoplasmic side of the membrane; sequence QSAWIIEP. A helical membrane pass occupies residues 226–246; that stretch reads KLWIIGTIFPMAGYSLGFFLA. Residues 247–289 are Extracellular-facing; it reads RIAGQPWYRCRTVALETGMQNTQLCSTIVQLSFSPEDLTYVFT. Residues 290–310 traverse the membrane as a helical segment; the sequence is FPLIYSIFQIAFAAIFLGIYV. The Cytoplasmic portion of the chain corresponds to 311-347; that stretch reads AYRKCHGKNDAEFPDIKDTKTEPESSFHQMNGGFQPE. Residues 323 to 335 are compositionally biased toward basic and acidic residues; sequence FPDIKDTKTEPES. Residues 323-347 form a disordered region; that stretch reads FPDIKDTKTEPESSFHQMNGGFQPE. Position 336 is a phosphoserine (serine 336).

The protein belongs to the bile acid:sodium symporter (BASS) (TC 2.A.28) family. Monomer and homodimer.

It localises to the membrane. It catalyses the reaction taurocholate(out) + 2 Na(+)(out) = taurocholate(in) + 2 Na(+)(in). The enzyme catalyses cholate(out) + 2 Na(+)(out) = cholate(in) + 2 Na(+)(in). The catalysed reaction is taurochenodeoxycholate(out) + 2 Na(+)(out) = taurochenodeoxycholate(in) + 2 Na(+)(in). It carries out the reaction tauroursodeoxycholate(out) + 2 Na(+)(out) = tauroursodeoxycholate(in) + 2 Na(+)(in). It catalyses the reaction glycocholate(out) + 2 Na(+)(out) = glycocholate(in) + 2 Na(+)(in). The enzyme catalyses tauronorcholate(out) + 2 Na(+)(out) = tauronorcholate(in) + 2 Na(+)(in). The catalysed reaction is tauroallocholate(out) + 2 Na(+)(out) = tauroallocholate(in) + 2 Na(+)(in). It carries out the reaction taurodeoxycholate(out) + 2 Na(+)(out) = taurodeoxycholate(in) + 2 Na(+)(in). It catalyses the reaction tauro-beta-muricholate(out) + 2 Na(+)(out) = tauro-beta-muricholate(in) + 2 Na(+)(in). In terms of biological role, plays a critical role in the sodium-dependent reabsorption of bile acids from the lumen of the small intestine. Transports various bile acids, unconjugated or conjugated, such as cholate and taurocholate. Also responsible for bile acid transport in the renal proximal tubules, a salvage mechanism that helps conserve bile acids. Works collaboratively with the Na(+)-taurocholate cotransporting polypeptide (NTCP), the organic solute transporter (OST), and the bile salt export pump (BSEP), to ensure efficacious biological recycling of bile acids during enterohepatic circulation. This Oryctolagus cuniculus (Rabbit) protein is Ileal sodium/bile acid cotransporter (SLC10A2).